A 174-amino-acid polypeptide reads, in one-letter code: Peptide methionine sulfoxide reductase MsrA (174 aa).

The active site involves Cys10.

Belongs to the MsrA Met sulfoxide reductase family.

It carries out the reaction L-methionyl-[protein] + [thioredoxin]-disulfide + H2O = L-methionyl-(S)-S-oxide-[protein] + [thioredoxin]-dithiol. The enzyme catalyses [thioredoxin]-disulfide + L-methionine + H2O = L-methionine (S)-S-oxide + [thioredoxin]-dithiol. Its function is as follows. Has an important function as a repair enzyme for proteins that have been inactivated by oxidation. Catalyzes the reversible oxidation-reduction of methionine sulfoxide in proteins to methionine. This Arthrobacter sp. (strain FB24) protein is Peptide methionine sulfoxide reductase MsrA.